The chain runs to 320 residues: MKQEKYGVLMVNLGTPDAPTPQAVRRYLAEFLSDRRVVDTPRLLWWPLLRGIILPIRSPRVAKLYQSVWMEGGSPLLVISRRQHQALAARMPDTPVELGMSYGSPSLRSALDKLLAQGVTQLVVLPMYPQYSCSTTAAVWDGLAAQLRDNRQLPAIRFIRDYAEHPAYIAALKHRVEQSFAEHGEPDRLVISYHGIPVRYANEGDDYPQRCRATTEALIAALGLPEGKIMMTFQSRFGREPWLTPYTDETMQGLPAQGIKHIQIMCPGFAADCLETLEEIQEQNREIFLHAGGEAFHYIPALNDDPLHIDLLEQLVGKVE.

Fe cation contacts are provided by His-194 and Glu-275.

The protein belongs to the ferrochelatase family.

The protein localises to the cytoplasm. It catalyses the reaction heme b + 2 H(+) = protoporphyrin IX + Fe(2+). The protein operates within porphyrin-containing compound metabolism; protoheme biosynthesis; protoheme from protoporphyrin-IX: step 1/1. Catalyzes the ferrous insertion into protoporphyrin IX. The protein is Ferrochelatase of Pectobacterium atrosepticum (strain SCRI 1043 / ATCC BAA-672) (Erwinia carotovora subsp. atroseptica).